The chain runs to 365 residues: Cobalt-precorrin-5B C(1)-methyltransferase (365 aa).

It belongs to the CbiD family.

The enzyme catalyses Co-precorrin-5B + S-adenosyl-L-methionine = Co-precorrin-6A + S-adenosyl-L-homocysteine. It functions in the pathway cofactor biosynthesis; adenosylcobalamin biosynthesis; cob(II)yrinate a,c-diamide from sirohydrochlorin (anaerobic route): step 6/10. Catalyzes the methylation of C-1 in cobalt-precorrin-5B to form cobalt-precorrin-6A. The sequence is that of Cobalt-precorrin-5B C(1)-methyltransferase from Clostridium perfringens (strain SM101 / Type A).